We begin with the raw amino-acid sequence, 276 residues long: Large ribosomal subunit protein uL2 (276 aa).

The interval 224 to 265 (VMNPVDHPHGGGEGRTASGRHPVSPWGLPTKGYKTRNNKRTD) is disordered.

Belongs to the universal ribosomal protein uL2 family. In terms of assembly, part of the 50S ribosomal subunit. Forms a bridge to the 30S subunit in the 70S ribosome.

Its function is as follows. One of the primary rRNA binding proteins. Required for association of the 30S and 50S subunits to form the 70S ribosome, for tRNA binding and peptide bond formation. It has been suggested to have peptidyltransferase activity; this is somewhat controversial. Makes several contacts with the 16S rRNA in the 70S ribosome. This chain is Large ribosomal subunit protein uL2, found in Dichelobacter nodosus (strain VCS1703A).